A 277-amino-acid polypeptide reads, in one-letter code: NADPH-dependent 7-cyano-7-deazaguanine reductase (277 aa).

83–85 (IES) is a binding site for substrate. 85–86 (SK) contributes to the NADPH binding site. The Thioimide intermediate role is filled by Cys-184. The active-site Proton donor is Asp-191. 223 to 224 (HE) serves as a coordination point for substrate. 252-253 (RG) contacts NADPH.

This sequence belongs to the GTP cyclohydrolase I family. QueF type 2 subfamily. In terms of assembly, homodimer.

It localises to the cytoplasm. It carries out the reaction 7-aminomethyl-7-carbaguanine + 2 NADP(+) = 7-cyano-7-deazaguanine + 2 NADPH + 3 H(+). It participates in tRNA modification; tRNA-queuosine biosynthesis. Its function is as follows. Catalyzes the NADPH-dependent reduction of 7-cyano-7-deazaguanine (preQ0) to 7-aminomethyl-7-deazaguanine (preQ1). The polypeptide is NADPH-dependent 7-cyano-7-deazaguanine reductase (Cupriavidus necator (strain ATCC 17699 / DSM 428 / KCTC 22496 / NCIMB 10442 / H16 / Stanier 337) (Ralstonia eutropha)).